A 356-amino-acid chain; its full sequence is Putative KilA-N domain-containing protein R878 (356 aa).

A compositionally biased stretch (basic residues) spans 1–12 (MKVRKSNNKPLK). The disordered stretch occupies residues 1–114 (MKVRKSNNKP…DDDGSDNNVY (114 aa)). Low complexity predominate over residues 14 to 46 (SASFTSGTKTGSKSAKSVNSGSKSMKSTKSSSK). Over residues 66–114 (SDNDELSDNEISDNESSDDDEISDNESSDDDEISDNEISDDDGSDNNVY) the composition is skewed to acidic residues. The KilA-N domain occupies 130 to 239 (NYSKGKFGNF…VRIGFCMEEW (110 aa)).

The polypeptide is Putative KilA-N domain-containing protein R878 (Acanthamoeba polyphaga (Amoeba)).